We begin with the raw amino-acid sequence, 412 residues long: GTPase Obg (412 aa).

In terms of domain architecture, Obg spans 1–159 (MKFLDQAKIF…RWIWLRLKMI (159 aa)). An OBG-type G domain is found at 160–327 (ADAGLVGLPN…ILARLFTHIR (168 aa)). GTP is bound by residues 166–173 (GLPNAGKS), 191–195 (FTTLH), 212–215 (DIPG), 279–282 (NKCD), and 308–310 (SGV). Residues S173 and T193 each coordinate Mg(2+). The disordered stretch occupies residues 335 to 412 (AVPAASPIFG…ADDEEDDAEE (78 aa)). A compositionally biased stretch (acidic residues) spans 385–412 (NDGDEVDEDYDDEDLEEVADDEEDDAEE).

It belongs to the TRAFAC class OBG-HflX-like GTPase superfamily. OBG GTPase family. Monomer. Mg(2+) serves as cofactor.

Its subcellular location is the cytoplasm. An essential GTPase which binds GTP, GDP and possibly (p)ppGpp with moderate affinity, with high nucleotide exchange rates and a fairly low GTP hydrolysis rate. Plays a role in control of the cell cycle, stress response, ribosome biogenesis and in those bacteria that undergo differentiation, in morphogenesis control. The chain is GTPase Obg from Paramagnetospirillum magneticum (strain ATCC 700264 / AMB-1) (Magnetospirillum magneticum).